Consider the following 117-residue polypeptide: Ig heavy chain V region 23 (117 aa).

Positions 1-19 (MGWSCIILFLVAAANGVHS) are cleaved as a signal peptide. The tract at residues 20–49 (QVQLQQPGTELVKPGASVKLSCKASGYTFT) is framework-1. Cysteine 41 and cysteine 115 are oxidised to a cystine. The tract at residues 50–54 (SYWMH) is complementarity-determining-1. The framework-2 stretch occupies residues 55 to 68 (WVKQRPGQGLEWIG). The tract at residues 69-85 (NINPGNGGTNYNEKFKS) is complementarity-determining-2. The segment at 86–117 (KVTLTVDKSSSTAYTQLSSLTSEDSAVYYCAR) is framework-3.

The chain is Ig heavy chain V region 23 from Mus musculus (Mouse).